The following is a 178-amino-acid chain: Cytochrome b6-f complex iron-sulfur subunit (178 aa).

The helical transmembrane segment at Leu20–Ile42 threads the bilayer. Positions Thr71–Val161 constitute a Rieske domain. Positions 107, 109, 125, and 128 each coordinate [2Fe-2S] cluster. Cys112 and Cys127 are joined by a disulfide.

The protein belongs to the Rieske iron-sulfur protein family. In terms of assembly, the 4 large subunits of the cytochrome b6-f complex are cytochrome b6, subunit IV (17 kDa polypeptide, PetD), cytochrome f and the Rieske protein, while the 4 small subunits are PetG, PetL, PetM and PetN. The complex functions as a dimer. [2Fe-2S] cluster serves as cofactor.

The protein resides in the cellular thylakoid membrane. It carries out the reaction 2 oxidized [plastocyanin] + a plastoquinol + 2 H(+)(in) = 2 reduced [plastocyanin] + a plastoquinone + 4 H(+)(out). Its function is as follows. Component of the cytochrome b6-f complex, which mediates electron transfer between photosystem II (PSII) and photosystem I (PSI), cyclic electron flow around PSI, and state transitions. The protein is Cytochrome b6-f complex iron-sulfur subunit of Synechococcus sp. (strain WH7803).